Consider the following 58-residue polypeptide: NADH dehydrogenase [ubiquinone] 1 beta subcomplex subunit 1 (58 aa).

A helical membrane pass occupies residues 11 to 27; sequence HWVHVLVPMGFVIGCYL.

This sequence belongs to the complex I NDUFB1 subunit family. Complex I is composed of 45 different subunits.

The protein localises to the mitochondrion inner membrane. Functionally, accessory subunit of the mitochondrial membrane respiratory chain NADH dehydrogenase (Complex I) that is believed not to be involved in catalysis. Complex I functions in the transfer of electrons from NADH to the respiratory chain. The immediate electron acceptor for the enzyme is believed to be ubiquinone. This chain is NADH dehydrogenase [ubiquinone] 1 beta subcomplex subunit 1 (NDUFB1), found in Homo sapiens (Human).